We begin with the raw amino-acid sequence, 368 residues long: Galactoside 2-alpha-L-fucosyltransferase SEC1 (368 aa).

The segment at 1 to 20 is disordered; it reads MWDMRAVAPQRPAAGHPRAG. The Cytoplasmic segment spans residues 1-31; sequence MWDMRAVAPQRPAAGHPRAGWPRKLKTAATR. The chain crosses the membrane as a helical span at residues 32–52; that stretch reads FWATCPSSSTVCFLFVIFAVS. Residues 53 to 368 are Lumenal-facing; sequence TVFHCHRRLA…NLGQARESHP (316 aa).

This sequence belongs to the glycosyltransferase 11 family. Kidney.

The protein localises to the golgi apparatus. Its subcellular location is the golgi stack membrane. It carries out the reaction a ganglioside GM1 + GDP-beta-L-fucose = a ganglioside Fuc-GM1 + GDP + H(+). It functions in the pathway protein modification; protein glycosylation. Catalyzes the transfer of alpha 1,2-linked fucose to ganglioside GM1 and galacto-N-biose. The chain is Galactoside 2-alpha-L-fucosyltransferase SEC1 from Bos taurus (Bovine).